A 338-amino-acid polypeptide reads, in one-letter code: NADPH dehydrogenase (338 aa).

22–25 (SPMC) serves as a coordination point for FMN. Tyrosine 27 provides a ligand contact to substrate. Alanine 59 and glutamine 101 together coordinate FMN. 163–166 (HAAH) contributes to the substrate binding site. FMN contacts are provided by residues arginine 214 and 306-307 (GR).

The protein belongs to the NADH:flavin oxidoreductase/NADH oxidase family. NamA subfamily. In terms of assembly, homotetramer. FMN is required as a cofactor.

It catalyses the reaction A + NADPH + H(+) = AH2 + NADP(+). Functionally, catalyzes the reduction of the double bond of an array of alpha,beta-unsaturated aldehydes and ketones. It also reduces the nitro group of nitroester and nitroaromatic compounds. It could have a role in detoxification processes. The protein is NADPH dehydrogenase of Listeria innocua serovar 6a (strain ATCC BAA-680 / CLIP 11262).